The chain runs to 750 residues: GRIP and coiled-coil domain-containing protein C27D7.02c (750 aa).

Disordered stretches follow at residues 14-53 and 188-280; these read AQGQ…AKNM and KTVE…RDIA. 2 stretches are compositionally biased toward basic and acidic residues: residues 18 to 34 and 188 to 198; these read EEAK…DQLR and KTVETKNDVPE. The stretch at 28 to 182 forms a coiled coil; that stretch reads QEEDQLRRNN…AQSIEQEVIS (155 aa). Polar residues predominate over residues 201 to 213; the sequence is RPSTDTIGVSSAL. Positions 213 to 243 form a coiled coil; sequence LSKKKKKRNRKNQKKKSTKQNIEATTENDAL. Positions 214 to 230 are enriched in basic residues; that stretch reads SKKKKKRNRKNQKKKST. A compositionally biased stretch (polar residues) spans 233–251; the sequence is NIEATTENDALSESISTPD. The span at 269–280 shows a compositional bias: basic and acidic residues; the sequence is ADSKEEERRDIA. Residues 344–665 adopt a coiled-coil conformation; sequence KLVEELTKQL…YEHLQKSFKN (322 aa). Residues 672-703 form a disordered region; that stretch reads KQQPSNHGRNSSVSRSSSSVEVNSKHPGSDDM. Residues 676 to 693 show a composition bias toward low complexity; the sequence is SNHGRNSSVSRSSSSVEV. Basic and acidic residues predominate over residues 694–703; the sequence is NSKHPGSDDM. The region spanning 700–748 is the GRIP domain; sequence SDDMLIDKEYTRNILFQFLEQRDRRPEIVNLLSILLDLSEEQKQKLLSV.

It localises to the cytoplasm. The chain is GRIP and coiled-coil domain-containing protein C27D7.02c from Schizosaccharomyces pombe (strain 972 / ATCC 24843) (Fission yeast).